A 182-amino-acid chain; its full sequence is Large ribosomal subunit protein uL6 (182 aa).

The protein belongs to the universal ribosomal protein uL6 family. Part of the 50S ribosomal subunit.

Its function is as follows. This protein binds to the 23S rRNA, and is important in its secondary structure. It is located near the subunit interface in the base of the L7/L12 stalk, and near the tRNA binding site of the peptidyltransferase center. The polypeptide is Large ribosomal subunit protein uL6 (Methanococcus maripaludis (strain C7 / ATCC BAA-1331)).